Consider the following 226-residue polypeptide: Octanoyltransferase (226 aa).

Residues 31 to 226 enclose the BPL/LPL catalytic domain; the sequence is PETPDALWIC…SQKLGTYLAP (196 aa). Residues 70–77, 159–161, and 172–174 contribute to the substrate site; these read RGGQVTFH, ALG, and GVA. Residue C190 is the Acyl-thioester intermediate of the active site.

This sequence belongs to the LipB family.

It localises to the cytoplasm. The catalysed reaction is octanoyl-[ACP] + L-lysyl-[protein] = N(6)-octanoyl-L-lysyl-[protein] + holo-[ACP] + H(+). Its pathway is protein modification; protein lipoylation via endogenous pathway; protein N(6)-(lipoyl)lysine from octanoyl-[acyl-carrier-protein]: step 1/2. Functionally, catalyzes the transfer of endogenously produced octanoic acid from octanoyl-acyl-carrier-protein onto the lipoyl domains of lipoate-dependent enzymes. Lipoyl-ACP can also act as a substrate although octanoyl-ACP is likely to be the physiological substrate. The chain is Octanoyltransferase from Variovorax paradoxus (strain S110).